Consider the following 271-residue polypeptide: Tryptophan synthase alpha chain (271 aa).

Residues Glu56 and Asp67 each act as proton acceptor in the active site.

It belongs to the TrpA family. As to quaternary structure, tetramer of two alpha and two beta chains.

It catalyses the reaction (1S,2R)-1-C-(indol-3-yl)glycerol 3-phosphate + L-serine = D-glyceraldehyde 3-phosphate + L-tryptophan + H2O. It functions in the pathway amino-acid biosynthesis; L-tryptophan biosynthesis; L-tryptophan from chorismate: step 5/5. Its function is as follows. The alpha subunit is responsible for the aldol cleavage of indoleglycerol phosphate to indole and glyceraldehyde 3-phosphate. The sequence is that of Tryptophan synthase alpha chain from Mycobacterium avium (strain 104).